The chain runs to 293 residues: tRNA pseudouridine synthase B (293 aa).

Residue aspartate 39 is the Nucleophile of the active site.

Belongs to the pseudouridine synthase TruB family. Type 1 subfamily.

The enzyme catalyses uridine(55) in tRNA = pseudouridine(55) in tRNA. In terms of biological role, responsible for synthesis of pseudouridine from uracil-55 in the psi GC loop of transfer RNAs. In Streptococcus mutans serotype c (strain ATCC 700610 / UA159), this protein is tRNA pseudouridine synthase B.